Reading from the N-terminus, the 529-residue chain is Endoglucanase 21 (529 aa).

Positions 1–24 (MVAAMTMCAAVAVLLVLTSTMAAA) are cleaved as a signal peptide. Asp-89 (nucleophile) is an active-site residue. Asn-342 carries N-linked (GlcNAc...) asparagine glycosylation. Active-site residues include His-429, Asp-481, and Glu-490.

Belongs to the glycosyl hydrolase 9 (cellulase E) family. In terms of tissue distribution, expressed in roots and flowers.

The protein localises to the secreted. It catalyses the reaction Endohydrolysis of (1-&gt;4)-beta-D-glucosidic linkages in cellulose, lichenin and cereal beta-D-glucans.. This chain is Endoglucanase 21 (GLU9), found in Oryza sativa subsp. japonica (Rice).